Consider the following 465-residue polypeptide: Cysteine--tRNA ligase (465 aa).

Residue Cys-27 participates in Zn(2+) binding. The 'HIGH' region motif lies at 29-39 (PTVYDDAHLGH). Zn(2+) contacts are provided by Cys-207, His-237, and Glu-241. A 'KMSKS' region motif is present at residues 269 to 273 (KMSKS). Lys-272 serves as a coordination point for ATP.

It belongs to the class-I aminoacyl-tRNA synthetase family. Monomer. It depends on Zn(2+) as a cofactor.

The protein localises to the cytoplasm. The catalysed reaction is tRNA(Cys) + L-cysteine + ATP = L-cysteinyl-tRNA(Cys) + AMP + diphosphate. The polypeptide is Cysteine--tRNA ligase (Helicobacter pylori (strain HPAG1)).